Reading from the N-terminus, the 327-residue chain is Aromatase (327 aa).

Cys315 is a heme binding site.

This sequence belongs to the cytochrome P450 family. Requires heme as cofactor.

Its subcellular location is the membrane. It carries out the reaction testosterone + 3 reduced [NADPH--hemoprotein reductase] + 3 O2 = 17beta-estradiol + formate + 3 oxidized [NADPH--hemoprotein reductase] + 4 H2O + 4 H(+). The enzyme catalyses androst-4-ene-3,17-dione + 3 reduced [NADPH--hemoprotein reductase] + 3 O2 = estrone + formate + 3 oxidized [NADPH--hemoprotein reductase] + 4 H2O + 4 H(+). Functionally, catalyzes the formation of aromatic C18 estrogens from C19 androgens. In Coturnix japonica (Japanese quail), this protein is Aromatase (CYP19A1).